The primary structure comprises 117 residues: Large ribosomal subunit protein bL19 (117 aa).

Belongs to the bacterial ribosomal protein bL19 family.

Functionally, this protein is located at the 30S-50S ribosomal subunit interface and may play a role in the structure and function of the aminoacyl-tRNA binding site. This is Large ribosomal subunit protein bL19 from Shewanella halifaxensis (strain HAW-EB4).